A 28-amino-acid polypeptide reads, in one-letter code: Phospholipase A2 2 (28 aa).

It belongs to the phospholipase A2 family. Group I subfamily. Ca(2+) is required as a cofactor. Expressed by the venom gland.

Its subcellular location is the secreted. The enzyme catalyses a 1,2-diacyl-sn-glycero-3-phosphocholine + H2O = a 1-acyl-sn-glycero-3-phosphocholine + a fatty acid + H(+). Snake venom phospholipase A2 (PLA2) that inhibits neuromuscular transmission by blocking acetylcholine release from the nerve termini. PLA2 catalyzes the calcium-dependent hydrolysis of the 2-acyl groups in 3-sn-phosphoglycerides. The protein is Phospholipase A2 2 of Micrurus nigrocinctus (Central American coral snake).